Consider the following 600-residue polypeptide: Elongation factor 4 (600 aa).

Residues 4–187 enclose the tr-type G domain; it reads KYIRNFSIVA…AIIEQIPPPL (184 aa). Residues 16 to 21 and 134 to 137 each bind GTP; these read DHGKST and NKID.

Belongs to the TRAFAC class translation factor GTPase superfamily. Classic translation factor GTPase family. LepA subfamily.

It is found in the cell membrane. It catalyses the reaction GTP + H2O = GDP + phosphate + H(+). Its function is as follows. Required for accurate and efficient protein synthesis under certain stress conditions. May act as a fidelity factor of the translation reaction, by catalyzing a one-codon backward translocation of tRNAs on improperly translocated ribosomes. Back-translocation proceeds from a post-translocation (POST) complex to a pre-translocation (PRE) complex, thus giving elongation factor G a second chance to translocate the tRNAs correctly. Binds to ribosomes in a GTP-dependent manner. The sequence is that of Elongation factor 4 from Malacoplasma penetrans (strain HF-2) (Mycoplasma penetrans).